The sequence spans 115 residues: Peptidyl-tRNA hydrolase (115 aa).

This sequence belongs to the PTH2 family.

The protein localises to the cytoplasm. It carries out the reaction an N-acyl-L-alpha-aminoacyl-tRNA + H2O = an N-acyl-L-amino acid + a tRNA + H(+). The natural substrate for this enzyme may be peptidyl-tRNAs which drop off the ribosome during protein synthesis. In Methanosarcina acetivorans (strain ATCC 35395 / DSM 2834 / JCM 12185 / C2A), this protein is Peptidyl-tRNA hydrolase.